Here is a 472-residue protein sequence, read N- to C-terminus: Ribulose bisphosphate carboxylase large chain (472 aa).

2 residues coordinate substrate: Asn-120 and Thr-170. The Proton acceptor role is filled by Lys-172. Lys-174 serves as a coordination point for substrate. Residues Lys-198, Asp-200, and Glu-201 each coordinate Mg(2+). Lys-198 carries the post-translational modification N6-carboxylysine. His-291 functions as the Proton acceptor in the catalytic mechanism. Residues Arg-292, His-324, and Ser-376 each contribute to the substrate site. Residues 461-467 (EIKFEFE) carry the Interacts with RbcX2 motif.

The protein belongs to the RuBisCO large chain family. Type I subfamily. In terms of assembly, heterohexadecamer of 8 large chains and 8 small chains; disulfide-linked. The disulfide link is formed within the large subunit homodimers. The exposed C-terminus binds in a cleft in the RbcX2 (shown with endogenous and Anabaena strain CA protein). RbcX2 is displaced by RbcS; as RbcX2 is removed RbcS mediates the ordering of an internal RbcL loop (Thr-64-Leu-70) in a catalytically active conformation. Mg(2+) is required as a cofactor. The disulfide bond which can form in the large chain dimeric partners within the hexadecamer appears to be associated with oxidative stress and protein turnover.

It is found in the carboxysome. It catalyses the reaction 2 (2R)-3-phosphoglycerate + 2 H(+) = D-ribulose 1,5-bisphosphate + CO2 + H2O. The enzyme catalyses D-ribulose 1,5-bisphosphate + O2 = 2-phosphoglycolate + (2R)-3-phosphoglycerate + 2 H(+). RuBisCO catalyzes two reactions: the carboxylation of D-ribulose 1,5-bisphosphate, the primary event in carbon dioxide fixation, as well as the oxidative fragmentation of the pentose substrate in the photorespiration process. Both reactions occur simultaneously and in competition at the same active site. This chain is Ribulose bisphosphate carboxylase large chain (cbbL), found in Synechococcus sp. (strain ATCC 27144 / PCC 6301 / SAUG 1402/1) (Anacystis nidulans).